A 201-amino-acid polypeptide reads, in one-letter code: Transgelin (201 aa).

An N-acetylalanine modification is found at A2. Positions 24–137 constitute a Calponin-homology (CH) domain; that stretch reads EELEERLVEW…RTVMALGSLA (114 aa). The tract at residues 154-161 is could be involved in actin-binding; the sequence is KKAQEHKR. Phosphoserine is present on S166. K172 is modified (N6-acetyllysine). The stretch at 175–200 is one Calponin-like repeat; sequence IGLQMGSNRGASQAGMTGYGRPRQII. S181 is subject to Phosphoserine. An Omega-N-methylarginine modification is found at R183.

Belongs to the calponin family. As to expression, smooth muscle and mesenchymal cells but not in skeletal muscle or lymphocytes.

It is found in the cytoplasm. Its function is as follows. Actin cross-linking/gelling protein. The protein is Transgelin (Tagln) of Rattus norvegicus (Rat).